Consider the following 500-residue polypeptide: Aspartyl/glutamyl-tRNA(Asn/Gln) amidotransferase subunit B (500 aa).

This sequence belongs to the GatB/GatE family. GatB subfamily. As to quaternary structure, heterotrimer of A, B and C subunits.

It catalyses the reaction L-glutamyl-tRNA(Gln) + L-glutamine + ATP + H2O = L-glutaminyl-tRNA(Gln) + L-glutamate + ADP + phosphate + H(+). It carries out the reaction L-aspartyl-tRNA(Asn) + L-glutamine + ATP + H2O = L-asparaginyl-tRNA(Asn) + L-glutamate + ADP + phosphate + 2 H(+). In terms of biological role, allows the formation of correctly charged Asn-tRNA(Asn) or Gln-tRNA(Gln) through the transamidation of misacylated Asp-tRNA(Asn) or Glu-tRNA(Gln) in organisms which lack either or both of asparaginyl-tRNA or glutaminyl-tRNA synthetases. The reaction takes place in the presence of glutamine and ATP through an activated phospho-Asp-tRNA(Asn) or phospho-Glu-tRNA(Gln). The chain is Aspartyl/glutamyl-tRNA(Asn/Gln) amidotransferase subunit B from Brucella ovis (strain ATCC 25840 / 63/290 / NCTC 10512).